The chain runs to 683 residues: Multidrug resistance protein MdtO (683 aa).

Transmembrane regions (helical) follow at residues 43 to 63 (VILI…AVLF), 75 to 95 (FVAI…FLIY), 100 to 120 (GEPL…MFLM), 125 to 145 (LGLV…FPAM), 158 to 178 (WCIV…VLWF), 402 to 422 (FGGA…VMPW), 426 to 446 (IVEL…IATS), 457 to 477 (MVVT…YDLV), and 483 to 503 (ALGI…VWPE).

This sequence belongs to the MdtO family. In terms of assembly, could be part of a tripartite efflux system composed of MdtN, MdtO and MdtP.

The protein resides in the cell inner membrane. Could be involved in resistance to puromycin, acriflavine and tetraphenylarsonium chloride. The protein is Multidrug resistance protein MdtO (mdtO) of Escherichia coli (strain K12).